The primary structure comprises 397 residues: MIRYLTSGESHGPALSAIVEGVPAGVGITPEMINTELARRQQGYGRGGRMKIETDQAEVLSGIRFGKTIGSPITLIIRNRDWENWTTTMSQFSEPAEDIAKITIPRPGHADLTGKIKYGLNDIRPVIERSSARETTARVAAGTISRIFLKAIGIEIGSYISAIGSAGETTADTQIEKLLRSGAETLARKADRSAVRMLDKKKEAEAIIAIDAAKDAGDTLGGIIEIFITGVPMGLGSYMQHDRRLDANLAAALISIQAIKGVEIGTAFANALKPGSQVHDEFIIEPEKGLTRSSNRAGGIEGSMSSGQTIHLRAAMKPISSLLTPLHSFDSETLQPTLSRFERSDTCAVPAAGVVAEAMVSTVIANAVLEKFGGDHLGEIQTRISLHRDLTRKAFIA.

NADP(+)-binding residues include Arg-40 and Arg-46. FMN contacts are provided by residues 129-131 (RSS), 257-258 (QA), Gly-302, 317-321 (KPISS), and Arg-343.

It belongs to the chorismate synthase family. Homotetramer. FMNH2 is required as a cofactor.

The enzyme catalyses 5-O-(1-carboxyvinyl)-3-phosphoshikimate = chorismate + phosphate. The protein operates within metabolic intermediate biosynthesis; chorismate biosynthesis; chorismate from D-erythrose 4-phosphate and phosphoenolpyruvate: step 7/7. In terms of biological role, catalyzes the anti-1,4-elimination of the C-3 phosphate and the C-6 proR hydrogen from 5-enolpyruvylshikimate-3-phosphate (EPSP) to yield chorismate, which is the branch point compound that serves as the starting substrate for the three terminal pathways of aromatic amino acid biosynthesis. This reaction introduces a second double bond into the aromatic ring system. This Chlorobium phaeobacteroides (strain DSM 266 / SMG 266 / 2430) protein is Chorismate synthase.